We begin with the raw amino-acid sequence, 962 residues long: Probable transport protein MmpL9 (962 aa).

Transmembrane regions (helical) follow at residues 25-45 (LAAIPILLCWLGFTVFVSVAV), 201-223 (LITGLTFAVITVLLLLVYRSIAT), 225-247 (LLILPMVFIGLGATRGTIAFLGY), 256-276 (FVVNILTALAIAAGTDYAIFL), 302-322 (ANVILGSGLTIAGATYCLSFA), 335-355 (AIGMLVSVAAALTLAPAIIAI), 383-403 (WPGPILATSVALALVGLLALP), 768-788 (YDILIVGIAAVCLVFIVMLMI), 796-816 (LVIVGTVLLSLGTAFGLSVLI), 820-840 (FVGLQVHWTIVAMSVIVLLAV), 867-887 (AMAGTGAVVTSAGLVFAFTMA), and 895-915 (RVIGQVGTTIGLGLLFDTLVV).

This sequence belongs to the resistance-nodulation-cell division (RND) (TC 2.A.6) family. MmpL subfamily.

Its subcellular location is the cell membrane. This is Probable transport protein MmpL9 (mmpL9) from Mycobacterium tuberculosis (strain ATCC 25618 / H37Rv).